Reading from the N-terminus, the 294-residue chain is Deubiquitinase OTUD6B (294 aa).

Disordered regions lie at residues 1–46 (MDEA…RKQL) and 67–120 (AFAQ…ERDE). Polar residues-rich tracts occupy residues 27–36 (KIQSMKNSVP) and 73–86 (PEPT…NGVT). The span at 111 to 120 (KAAQEKERDE) shows a compositional bias: basic and acidic residues. The OTU domain occupies 150-287 (LQIRQIPSDG…GEHYNSVELL (138 aa)). The interval 155 to 161 (IPSDGHC) is cys-loop. The active site involves D158. C161 (nucleophile) is an active-site residue. A variable-loop region spans residues 222-232 (IVNTPAWGGQL). The segment at 270–280 (YMRHAYGLGEH) is his-loop. The active site involves H280.

It carries out the reaction Thiol-dependent hydrolysis of ester, thioester, amide, peptide and isopeptide bonds formed by the C-terminal Gly of ubiquitin (a 76-residue protein attached to proteins as an intracellular targeting signal).. Functionally, deubiquitinating enzyme that may play a role in the ubiquitin-dependent regulation of different cellular processes. This Xenopus tropicalis (Western clawed frog) protein is Deubiquitinase OTUD6B (otud6b).